A 75-amino-acid chain; its full sequence is Translation initiation factor IF-1 1 (75 aa).

In terms of domain architecture, S1-like spans 1-74; it reads MARSDMIEVD…TRGRIVYRYR (74 aa).

This sequence belongs to the IF-1 family. As to quaternary structure, component of the 30S ribosomal translation pre-initiation complex which assembles on the 30S ribosome in the order IF-2 and IF-3, IF-1 and N-formylmethionyl-tRNA(fMet); mRNA recruitment can occur at any time during PIC assembly.

Its subcellular location is the cytoplasm. Its function is as follows. One of the essential components for the initiation of protein synthesis. Stabilizes the binding of IF-2 and IF-3 on the 30S subunit to which N-formylmethionyl-tRNA(fMet) subsequently binds. Helps modulate mRNA selection, yielding the 30S pre-initiation complex (PIC). Upon addition of the 50S ribosomal subunit IF-1, IF-2 and IF-3 are released leaving the mature 70S translation initiation complex. The protein is Translation initiation factor IF-1 1 of Symbiobacterium thermophilum (strain DSM 24528 / JCM 14929 / IAM 14863 / T).